The sequence spans 167 residues: Disulfide bond formation protein B (167 aa).

Topologically, residues 1-12 are cytoplasmic; the sequence is MFLNLLDAPRRL. A helical membrane pass occupies residues 13-29; that stretch reads LALVALGCVALLAFGLY. At 30–47 the chain is on the periplasmic side; the sequence is LQHVVGLEPCPMCIVQRY. A disulfide bridge links C39 with C42. A helical membrane pass occupies residues 48–63; the sequence is ALVLVAIVAGLTAITS. Residues 64 to 69 are Cytoplasmic-facing; it reads NKKGLI. Residues 70–87 traverse the membrane as a helical segment; it reads TGSGVLLLLAGFGAFVAA. Residues 88-143 lie on the Periplasmic side of the membrane; the sequence is RQSFLQWYPPEVASCGRDFYGMIETFPLQRAIPMIFKGSGDCAKVDWTFLGGSIAN. A disulfide bridge connects residues C102 and C129. Residues 144–162 form a helical membrane-spanning segment; the sequence is WSFVCFAVIGLTALTLIAR. Topologically, residues 163 to 167 are cytoplasmic; the sequence is LARQR.

This sequence belongs to the DsbB family.

The protein resides in the cell inner membrane. In terms of biological role, required for disulfide bond formation in some periplasmic proteins. Acts by oxidizing the DsbA protein. The polypeptide is Disulfide bond formation protein B (Polaromonas naphthalenivorans (strain CJ2)).